A 244-amino-acid chain; its full sequence is Na(+)-translocating NADH-quinone reductase subunit E (244 aa).

6 helical membrane-spanning segments follow: residues 11–31 (LLGI…TFLG), 50–70 (MSVA…HYFI), 90–110 (FLEL…LEVL), 123–143 (GIFL…LFGI), 153–173 (VVFS…FATI), and 191–211 (ISFI…GIDI). Positions 222–236 (VTNIATDSPQPNTHS) are enriched in polar residues. Positions 222–244 (VTNIATDSPQPNTHSSSEEPKAS) are disordered.

It belongs to the NqrDE/RnfAE family. In terms of assembly, composed of six subunits; NqrA, NqrB, NqrC, NqrD, NqrE and NqrF.

Its subcellular location is the cell inner membrane. It carries out the reaction a ubiquinone + n Na(+)(in) + NADH + H(+) = a ubiquinol + n Na(+)(out) + NAD(+). Its function is as follows. NQR complex catalyzes the reduction of ubiquinone-1 to ubiquinol by two successive reactions, coupled with the transport of Na(+) ions from the cytoplasm to the periplasm. NqrA to NqrE are probably involved in the second step, the conversion of ubisemiquinone to ubiquinol. This chain is Na(+)-translocating NADH-quinone reductase subunit E, found in Chlamydia trachomatis serovar A (strain ATCC VR-571B / DSM 19440 / HAR-13).